A 383-amino-acid polypeptide reads, in one-letter code: S-adenosylmethionine synthase (383 aa).

Residue His15 coordinates ATP. Asp17 contributes to the Mg(2+) binding site. Glu43 is a K(+) binding site. 2 residues coordinate L-methionine: Glu56 and Gln99. Positions Gln99–Arg109 are flexible loop. ATP contacts are provided by residues Asp164 to Lys166, Arg230 to Phe231, Asp239, Arg245 to Lys246, Ala262, and Lys266. An L-methionine-binding site is contributed by Asp239. Lys270 lines the L-methionine pocket.

This sequence belongs to the AdoMet synthase family. In terms of assembly, homotetramer; dimer of dimers. The cofactor is Mg(2+). K(+) is required as a cofactor.

Its subcellular location is the cytoplasm. It carries out the reaction L-methionine + ATP + H2O = S-adenosyl-L-methionine + phosphate + diphosphate. It participates in amino-acid biosynthesis; S-adenosyl-L-methionine biosynthesis; S-adenosyl-L-methionine from L-methionine: step 1/1. In terms of biological role, catalyzes the formation of S-adenosylmethionine (AdoMet) from methionine and ATP. The overall synthetic reaction is composed of two sequential steps, AdoMet formation and the subsequent tripolyphosphate hydrolysis which occurs prior to release of AdoMet from the enzyme. This is S-adenosylmethionine synthase from Shewanella baltica (strain OS155 / ATCC BAA-1091).